The sequence spans 578 residues: Sulfite reductase [NADPH] hemoprotein beta-component (578 aa).

Cysteine 441, cysteine 447, cysteine 487, and cysteine 491 together coordinate [4Fe-4S] cluster. Cysteine 491 is a binding site for siroheme.

It belongs to the nitrite and sulfite reductase 4Fe-4S domain family. As to quaternary structure, alpha(8)-beta(8). The alpha component is a flavoprotein, the beta component is a hemoprotein. The cofactor is siroheme. It depends on [4Fe-4S] cluster as a cofactor.

The enzyme catalyses hydrogen sulfide + 3 NADP(+) + 3 H2O = sulfite + 3 NADPH + 4 H(+). The protein operates within sulfur metabolism; hydrogen sulfide biosynthesis; hydrogen sulfide from sulfite (NADPH route): step 1/1. Functionally, component of the sulfite reductase complex that catalyzes the 6-electron reduction of sulfite to sulfide. This is one of several activities required for the biosynthesis of L-cysteine from sulfate. The sequence is that of Sulfite reductase [NADPH] hemoprotein beta-component from Vibrio vulnificus (strain CMCP6).